The following is a 1863-amino-acid chain: 5'-3' DNA helicase ZGRF1 (1863 aa).

Disordered regions lie at residues 78–110, 132–196, and 300–349; these read SRAVEPDGSREALESGSRTLVSSSRSLGCQPSG, ENSE…PLSL, and TQSI…PEAQ. Over residues 81–90 the composition is skewed to basic and acidic residues; sequence VEPDGSREAL. Over residues 92–105 the composition is skewed to low complexity; the sequence is SGSRTLVSSSRSLG. Composition is skewed to polar residues over residues 173-185 and 300-321; these read PVSTDNQSPITFS and TQSIGNLRCEQQSENPTRTTSR. Ser331 and Ser445 each carry phosphoserine. Disordered stretches follow at residues 460–496, 524–545, and 610–664; these read PVSPLPEIGHKQTEVEASLSTSSRISDDIADMGSKSN, TSDTDEASQEDSRLSQDSERWE, and GDVK…GVSP. A compositionally biased stretch (basic and acidic residues) spans 533-545; sequence EDSRLSQDSERWE. The Zn(2+) site is built by Cys1111, His1113, Cys1136, and Cys1144. A GRF-type zinc finger spans residues 1111 to 1153; it reads CHHNQPAKLVMVKKEGPNKGRLFYTCDKSKDNQCKFFKWLEEV.

Interacts with DNA repair protein RAD51; the interaction promotes RAD51 strand exchange activity. Also interacts with DNA repair proteins EXO1 and BRCA1; the interactions are increased following DNA damage induction.

The protein resides in the nucleus. The enzyme catalyses ATP + H2O = ADP + phosphate + H(+). The catalysed reaction is Couples ATP hydrolysis with the unwinding of duplex DNA at the replication fork by translocating in the 5'-3' direction. This creates two antiparallel DNA single strands (ssDNA). The leading ssDNA polymer is the template for DNA polymerase III holoenzyme which synthesizes a continuous strand.. 5'-3' DNA helicase which is recruited to sites of DNA damage and promotes repair of replication-blocking DNA lesions through stimulation of homologous recombination (HR). Promotes HR by directly stimulating RAD51-mediated strand exchange activity. Not required to load RAD51 at sites of DNA damage but promotes recombinational repair after RAD51 recruitment. Also promotes HR by positively regulating EXO1-mediated DNA end resection of DNA double-strand breaks. Required for recruitment of replication protein RPA2 to DNA damage sites. Promotes the initiation of the G2/M checkpoint but not its maintenance. Catalyzes Holliday junction branch migration and dissociation of D-loops and DNA flaps. In Mus musculus (Mouse), this protein is 5'-3' DNA helicase ZGRF1 (Zgrf1).